Consider the following 155-residue polypeptide: Large ribosomal subunit protein uL15 (155 aa).

Basic residues predominate over residues 1 to 16 (MVRRFKRAVKYRRGSR). A disordered region spans residues 1–35 (MVRRFKRAVKYRRGSRTHGWGRVGQHRKSGGSGGK).

Belongs to the universal ribosomal protein uL15 family. As to quaternary structure, part of the 50S ribosomal subunit.

Its function is as follows. Binds to the 23S rRNA. The chain is Large ribosomal subunit protein uL15 from Pyrobaculum arsenaticum (strain DSM 13514 / JCM 11321 / PZ6).